Here is an 88-residue protein sequence, read N- to C-terminus: Sec-independent protein translocase protein TatA (88 aa).

A helical membrane pass occupies residues 4–24 (LSIWHWLIVLAVVLVLFVGGG). The tract at residues 45–88 (ADDETMEGSTGSGGHIAPPGPAAGTVQRDASFSGTGRPSGSSTP) is disordered. Residues 75–88 (SFSGTGRPSGSSTP) are compositionally biased toward low complexity.

This sequence belongs to the TatA/E family. In terms of assembly, the Tat system comprises two distinct complexes: a TatABC complex, containing multiple copies of TatA, TatB and TatC subunits, and a separate TatA complex, containing only TatA subunits. Substrates initially bind to the TatABC complex, which probably triggers association of the separate TatA complex to form the active translocon.

The protein resides in the cell inner membrane. Its function is as follows. Part of the twin-arginine translocation (Tat) system that transports large folded proteins containing a characteristic twin-arginine motif in their signal peptide across membranes. TatA could form the protein-conducting channel of the Tat system. The polypeptide is Sec-independent protein translocase protein TatA (Gluconacetobacter diazotrophicus (strain ATCC 49037 / DSM 5601 / CCUG 37298 / CIP 103539 / LMG 7603 / PAl5)).